A 360-amino-acid chain; its full sequence is Phospho-N-acetylmuramoyl-pentapeptide-transferase (360 aa).

The next 10 membrane-spanning stretches (helical) occupy residues 27-47 (IVSL…MIAW), 73-93 (TMGG…WANL), 94-114 (SNPY…VGFV), 132-152 (WKYF…YAIG), 168-188 (VMPQ…VGTS), 199-219 (GLAI…AWAT), 236-256 (ASEL…FLWF), 263-283 (VFMG…IAVL), 288-308 (FLLV…ILQV), and 338-358 (VIVR…ATLK).

The protein belongs to the glycosyltransferase 4 family. MraY subfamily. Mg(2+) serves as cofactor.

It localises to the cell inner membrane. It catalyses the reaction UDP-N-acetyl-alpha-D-muramoyl-L-alanyl-gamma-D-glutamyl-meso-2,6-diaminopimeloyl-D-alanyl-D-alanine + di-trans,octa-cis-undecaprenyl phosphate = di-trans,octa-cis-undecaprenyl diphospho-N-acetyl-alpha-D-muramoyl-L-alanyl-D-glutamyl-meso-2,6-diaminopimeloyl-D-alanyl-D-alanine + UMP. It functions in the pathway cell wall biogenesis; peptidoglycan biosynthesis. Functionally, catalyzes the initial step of the lipid cycle reactions in the biosynthesis of the cell wall peptidoglycan: transfers peptidoglycan precursor phospho-MurNAc-pentapeptide from UDP-MurNAc-pentapeptide onto the lipid carrier undecaprenyl phosphate, yielding undecaprenyl-pyrophosphoryl-MurNAc-pentapeptide, known as lipid I. This Pectobacterium carotovorum subsp. carotovorum (strain PC1) protein is Phospho-N-acetylmuramoyl-pentapeptide-transferase.